The following is a 68-amino-acid chain: MAKVEDLRQKSDDQLAEELVQLKKEQFNLRFQAATNQLEAPARIREVRRSIAQIKTLQNERAASAAKA.

This sequence belongs to the universal ribosomal protein uL29 family.

This is Large ribosomal subunit protein uL29 from Erythrobacter litoralis (strain HTCC2594).